The sequence spans 66 residues: Phylloseptin-S6 (66 aa).

Positions 1-22 (MAFLKKSLFLVLFLGLVSLSIC) are cleaved as a signal peptide. Positions 23 to 46 (EEEKRETEEEEHDQEEDDKSEEKR) are excised as a propeptide. A disordered region spans residues 25–44 (EKRETEEEEHDQEEDDKSEE). Residues 30–41 (EEEEHDQEEDDK) are compositionally biased toward acidic residues. The residue at position 65 (Leu65) is a Leucine amide.

This sequence belongs to the frog skin active peptide (FSAP) family. Phylloseptin subfamily. In terms of tissue distribution, expressed by the skin glands.

It is found in the secreted. It localises to the target cell membrane. In terms of biological role, antimicrobial peptide with high activity against Gram-positive bacteria, low activity against Gram-negative bacteria, and moderate activity against fungi. Acts by causing bacterial membrane disruption inducing leakage of the intracellular content followed by cell death. It adopts an alpha-helical amphipathic structure in membrane environments. Also shows highly potent antiparasitic activity against Leishmania species. Shows moderate hemolytic activity on human erythrocytes. Is also active on human monocytes. The chain is Phylloseptin-S6 from Phyllomedusa sauvagei (Sauvage's leaf frog).